The primary structure comprises 182 residues: Large ribosomal subunit protein uL5 (182 aa).

The protein belongs to the universal ribosomal protein uL5 family. In terms of assembly, part of the 50S ribosomal subunit; part of the 5S rRNA/L5/L18/L25 subcomplex. Contacts the 5S rRNA and the P site tRNA. Forms a bridge to the 30S subunit in the 70S ribosome.

Functionally, this is one of the proteins that bind and probably mediate the attachment of the 5S RNA into the large ribosomal subunit, where it forms part of the central protuberance. In the 70S ribosome it contacts protein S13 of the 30S subunit (bridge B1b), connecting the 2 subunits; this bridge is implicated in subunit movement. Contacts the P site tRNA; the 5S rRNA and some of its associated proteins might help stabilize positioning of ribosome-bound tRNAs. This Nostoc punctiforme (strain ATCC 29133 / PCC 73102) protein is Large ribosomal subunit protein uL5.